A 532-amino-acid chain; its full sequence is Fatty aldehyde dehydrogenase HFD1 (532 aa).

Ser111 is subject to Phosphoserine. Residues 134 to 152 (IIAPFNFPLLLAFAPLAAA) traverse the membrane as a helical segment. 214–219 (GSPRVG) contributes to the NAD(+) binding site. Active-site residues include Glu236 and Cys273.

This sequence belongs to the aldehyde dehydrogenase family.

Its subcellular location is the lipid droplet. The protein resides in the mitochondrion outer membrane. The protein localises to the endosome membrane. It is found in the cytoplasmic granule membrane. It catalyses the reaction an aldehyde + NAD(+) + H2O = a carboxylate + NADH + 2 H(+). The enzyme catalyses hexadecanoate + NADH + 2 H(+) = hexadecanal + NAD(+) + H2O. It carries out the reaction 4-hydroxybenzaldehyde + NAD(+) + H2O = 4-hydroxybenzoate + NADH + 2 H(+). Catalyzes the oxidation of long-chain aliphatic aldehydes to fatty acids. Responsible for conversion of the sphingosine 1-phosphate (S1P) degradation product hexadecenal to hexadecenoic acid. Involved in coenzyme Q (CoQ) biosynthesis, catalyzing the last step in the tyrosine to 4-hydroxybenzoate (4-HB) pathway. Oxidizes 4-hydroxybenzaldehyde (4-Hbz) to 4-HB, the aromatic precursor for coenzyme Q. In Saccharomyces cerevisiae (strain ATCC 204508 / S288c) (Baker's yeast), this protein is Fatty aldehyde dehydrogenase HFD1 (HFD1).